The sequence spans 435 residues: Methylenetetrahydrofolate--tRNA-(uracil-5-)-methyltransferase TrmFO (435 aa).

10–15 (GAGLAG) is a binding site for FAD.

It belongs to the MnmG family. TrmFO subfamily. Homodimer. Requires FAD as cofactor.

Its subcellular location is the cytoplasm. The catalysed reaction is uridine(54) in tRNA + (6R)-5,10-methylene-5,6,7,8-tetrahydrofolate + NADH + H(+) = 5-methyluridine(54) in tRNA + (6S)-5,6,7,8-tetrahydrofolate + NAD(+). It carries out the reaction uridine(54) in tRNA + (6R)-5,10-methylene-5,6,7,8-tetrahydrofolate + NADPH + H(+) = 5-methyluridine(54) in tRNA + (6S)-5,6,7,8-tetrahydrofolate + NADP(+). Functionally, catalyzes the folate-dependent formation of 5-methyl-uridine at position 54 (M-5-U54) in all tRNAs. In Bacillus subtilis (strain 168), this protein is Methylenetetrahydrofolate--tRNA-(uracil-5-)-methyltransferase TrmFO.